Here is a 413-residue protein sequence, read N- to C-terminus: 2,3-bisphosphoglycerate-independent phosphoglycerate mutase (413 aa).

The protein belongs to the BPG-independent phosphoglycerate mutase family. A-PGAM subfamily.

The enzyme catalyses (2R)-2-phosphoglycerate = (2R)-3-phosphoglycerate. It functions in the pathway carbohydrate degradation; glycolysis; pyruvate from D-glyceraldehyde 3-phosphate: step 3/5. Catalyzes the interconversion of 2-phosphoglycerate and 3-phosphoglycerate. This Metallosphaera sedula (strain ATCC 51363 / DSM 5348 / JCM 9185 / NBRC 15509 / TH2) protein is 2,3-bisphosphoglycerate-independent phosphoglycerate mutase.